Reading from the N-terminus, the 248-residue chain is DNA repair protein RecO (248 aa).

It belongs to the RecO family.

Functionally, involved in DNA repair and RecF pathway recombination. The protein is DNA repair protein RecO of Oleidesulfovibrio alaskensis (strain ATCC BAA-1058 / DSM 17464 / G20) (Desulfovibrio alaskensis).